A 670-amino-acid chain; its full sequence is Auxin response factor 16 (670 aa).

The segment at residues 120–222 is a DNA-binding region (TF-B3); sequence FAKTLTQSDA…DLCVGIRRAK (103 aa). Polar residues predominate over residues 545–557; the sequence is KTQISSGGSNQNG. The disordered stretch occupies residues 545–579; the sequence is KTQISSGGSNQNGVAGREFSSSDEGSPCSKKVHDA. Residues 584-664 enclose the PB1 domain; it reads TGHCKVFMES…RRLTILTEQG (81 aa).

The protein belongs to the ARF family. Homodimers and heterodimers.

It localises to the nucleus. Functionally, auxin response factors (ARFs) are transcriptional factors that bind specifically to the DNA sequence 5'-TGTCTC-3' found in the auxin-responsive promoter elements (AuxREs). Could act as transcriptional activator or repressor. Formation of heterodimers with Aux/IAA proteins may alter their ability to modulate early auxin response genes expression. This is Auxin response factor 16 (ARF16) from Arabidopsis thaliana (Mouse-ear cress).